Here is a 190-residue protein sequence, read N- to C-terminus: Probable nicotinate-nucleotide adenylyltransferase (190 aa).

The protein belongs to the NadD family.

The enzyme catalyses nicotinate beta-D-ribonucleotide + ATP + H(+) = deamido-NAD(+) + diphosphate. The protein operates within cofactor biosynthesis; NAD(+) biosynthesis; deamido-NAD(+) from nicotinate D-ribonucleotide: step 1/1. Its function is as follows. Catalyzes the reversible adenylation of nicotinate mononucleotide (NaMN) to nicotinic acid adenine dinucleotide (NaAD). The chain is Probable nicotinate-nucleotide adenylyltransferase from Myxococcus xanthus (strain DK1622).